Reading from the N-terminus, the 349-residue chain is Holliday junction branch migration complex subunit RuvB (349 aa).

Residues 1-183 are large ATPase domain (RuvB-L); it reads MTDPSRLVTP…FGIPIRLNFY (183 aa). ATP contacts are provided by residues Leu22, Arg23, Gly64, Lys67, Thr68, Thr69, 130–132, Arg173, Tyr183, and Arg220; that span reads EDF. Thr68 provides a ligand contact to Mg(2+). Residues 184-254 are small ATPAse domain (RuvB-S); the sequence is TIEELESIVT…IADHALGALE (71 aa). Residues 257-349 form a head domain (RuvB-H) region; that stretch reads SAGLDAMDRR…GLFGDTGDQE (93 aa). Residues Arg293, Arg312, and Arg317 each contribute to the DNA site.

The protein belongs to the RuvB family. As to quaternary structure, homohexamer. Forms an RuvA(8)-RuvB(12)-Holliday junction (HJ) complex. HJ DNA is sandwiched between 2 RuvA tetramers; dsDNA enters through RuvA and exits via RuvB. An RuvB hexamer assembles on each DNA strand where it exits the tetramer. Each RuvB hexamer is contacted by two RuvA subunits (via domain III) on 2 adjacent RuvB subunits; this complex drives branch migration. In the full resolvosome a probable DNA-RuvA(4)-RuvB(12)-RuvC(2) complex forms which resolves the HJ.

It is found in the cytoplasm. The catalysed reaction is ATP + H2O = ADP + phosphate + H(+). Functionally, the RuvA-RuvB-RuvC complex processes Holliday junction (HJ) DNA during genetic recombination and DNA repair, while the RuvA-RuvB complex plays an important role in the rescue of blocked DNA replication forks via replication fork reversal (RFR). RuvA specifically binds to HJ cruciform DNA, conferring on it an open structure. The RuvB hexamer acts as an ATP-dependent pump, pulling dsDNA into and through the RuvAB complex. RuvB forms 2 homohexamers on either side of HJ DNA bound by 1 or 2 RuvA tetramers; 4 subunits per hexamer contact DNA at a time. Coordinated motions by a converter formed by DNA-disengaged RuvB subunits stimulates ATP hydrolysis and nucleotide exchange. Immobilization of the converter enables RuvB to convert the ATP-contained energy into a lever motion, pulling 2 nucleotides of DNA out of the RuvA tetramer per ATP hydrolyzed, thus driving DNA branch migration. The RuvB motors rotate together with the DNA substrate, which together with the progressing nucleotide cycle form the mechanistic basis for DNA recombination by continuous HJ branch migration. Branch migration allows RuvC to scan DNA until it finds its consensus sequence, where it cleaves and resolves cruciform DNA. The sequence is that of Holliday junction branch migration complex subunit RuvB from Rhodopseudomonas palustris (strain TIE-1).